Here is a 591-residue protein sequence, read N- to C-terminus: Oligopeptide-binding protein OppA (591 aa).

The protein belongs to the bacterial solute-binding protein 5 family. The complex is composed of an ATP-binding protein (OppD), two transmembrane proteins (OppB and OppC) and a solute-binding protein (OppA).

It localises to the periplasm. Functionally, part of the ABC transporter complex OppABCD involved in the uptake of oligopeptides. Peptide-binding protein that shows broad specificity but a moderate preference for hydrophobic oligopeptides and those that are 6-16 amino acids long. In Mycobacterium bovis (strain ATCC BAA-935 / AF2122/97), this protein is Oligopeptide-binding protein OppA.